We begin with the raw amino-acid sequence, 225 residues long: Rho GDP-dissociation inhibitor 3 (225 aa).

Belongs to the Rho GDI family. In terms of tissue distribution, primarily expressed in pancreas and brain.

Its subcellular location is the cytoplasm. Its function is as follows. Inhibits GDP/GTP exchange reaction of RhoB. Interacts specifically with the GDP- and GTP-bound forms of post-translationally processed Rhob and Rhog proteins, both of which show a growth-regulated expression in mammalian cells. Stimulates the release of the GDP-bound but not the GTP-bound RhoB protein. Also inhibits the GDP/GTP exchange of RhoB but shows less ability to inhibit the dissociation of prebound GTP. This is Rho GDP-dissociation inhibitor 3 (ARHGDIG) from Homo sapiens (Human).